We begin with the raw amino-acid sequence, 78 residues long: NAD(P)H-quinone oxidoreductase subunit O (78 aa).

Belongs to the complex I NdhO subunit family. In terms of assembly, NDH-1 can be composed of about 15 different subunits; different subcomplexes with different compositions have been identified which probably have different functions.

It localises to the cellular thylakoid membrane. It carries out the reaction a plastoquinone + NADH + (n+1) H(+)(in) = a plastoquinol + NAD(+) + n H(+)(out). It catalyses the reaction a plastoquinone + NADPH + (n+1) H(+)(in) = a plastoquinol + NADP(+) + n H(+)(out). NDH-1 shuttles electrons from an unknown electron donor, via FMN and iron-sulfur (Fe-S) centers, to quinones in the respiratory and/or the photosynthetic chain. The immediate electron acceptor for the enzyme in this species is believed to be plastoquinone. Couples the redox reaction to proton translocation, and thus conserves the redox energy in a proton gradient. Cyanobacterial NDH-1 also plays a role in inorganic carbon-concentration. This Prochlorococcus marinus (strain MIT 9301) protein is NAD(P)H-quinone oxidoreductase subunit O.